The following is an 872-amino-acid chain: Paramyosin (872 aa).

Positions 1 to 31 (MSLYRSPSAALLKSPSQAAFGAPFGSMSVAD) are nonhelical region. The stretch at 32–851 (LGSLTRLEDK…ESSLHLIRAK (820 aa)) forms a coiled coil. The interval 294 to 376 (EITQWKSKFD…ALLERAREQL (83 aa)) is interaction with unc-89. A nonhelical region region spans residues 856–866 (VVTGKSSSKIF).

It belongs to the paramyosin family. In terms of assembly, homodimer. May interact with unc-89 (via SH3 domain). In terms of processing, phosphorylated on serine residues in the N-terminal non-helical region. As to expression, expressed in body wall muscles of larvae and adults (at protein level). Expressed in gonadal myoepithelial sheath cells (at protein level).

Its subcellular location is the cytoplasm. It is found in the myofibril. The protein resides in the sarcomere. The protein localises to the a band. Its function is as follows. Structural component of the muscle thick filaments which is involved in assembly and organization of sarcomere myofilaments. Involved in ovulation. Plays a role in the formation of muscle connections, also called muscle arm extensions, between the body wall and the motor axons in the dorsal and ventral cord. The sequence is that of Paramyosin (unc-15) from Caenorhabditis elegans.